We begin with the raw amino-acid sequence, 123 residues long: uncharacterized protein (123 aa).

This is an uncharacterized protein from Methanocaldococcus jannaschii (strain ATCC 43067 / DSM 2661 / JAL-1 / JCM 10045 / NBRC 100440) (Methanococcus jannaschii).